The following is a 338-amino-acid chain: Large ribosomal subunit protein uL10 (338 aa).

The interval 303 to 338 (VEVSAAPAAEEEKEEEKKEEEKKEEDTGAAGLALLF) is disordered. The segment covering 317-328 (EEKKEEEKKEED) has biased composition (basic and acidic residues).

The protein belongs to the universal ribosomal protein uL10 family. In terms of assembly, part of the 50S ribosomal subunit. Forms part of the ribosomal stalk which helps the ribosome interact with GTP-bound translation factors. Forms a heptameric L10(L12)2(L12)2(L12)2 complex, where L10 forms an elongated spine to which the L12 dimers bind in a sequential fashion.

Functionally, forms part of the ribosomal stalk, playing a central role in the interaction of the ribosome with GTP-bound translation factors. The sequence is that of Large ribosomal subunit protein uL10 from Methanocaldococcus jannaschii (strain ATCC 43067 / DSM 2661 / JAL-1 / JCM 10045 / NBRC 100440) (Methanococcus jannaschii).